The sequence spans 380 residues: Glucose-1-phosphate adenylyltransferase (380 aa).

Residues Gly164, Glu179–Lys180, and Ser190 each bind alpha-D-glucose 1-phosphate.

This sequence belongs to the bacterial/plant glucose-1-phosphate adenylyltransferase family. Homotetramer.

The enzyme catalyses alpha-D-glucose 1-phosphate + ATP + H(+) = ADP-alpha-D-glucose + diphosphate. It participates in glycan biosynthesis; glycogen biosynthesis. Involved in the biosynthesis of ADP-glucose, a building block required for the elongation reactions to produce glycogen. Catalyzes the reaction between ATP and alpha-D-glucose 1-phosphate (G1P) to produce pyrophosphate and ADP-Glc. The sequence is that of Glucose-1-phosphate adenylyltransferase from Lacticaseibacillus casei (strain BL23) (Lactobacillus casei).